A 638-amino-acid polypeptide reads, in one-letter code: Carbon monoxide dehydrogenase (638 aa).

Residues Cys46, Cys55, Cys58, Cys63, and Cys74 each contribute to the [4Fe-4S] cluster site. [Ni-4Fe-5S] cluster-binding residues include His265, Cys299, Cys343, Cys452, Cys483, and Cys524.

This sequence belongs to the Ni-containing carbon monoxide dehydrogenase family. As to quaternary structure, homodimer. It depends on [4Fe-4S] cluster as a cofactor. The cofactor is [Ni-4Fe-5S] cluster.

The catalysed reaction is CO + 2 oxidized [2Fe-2S]-[ferredoxin] + H2O = 2 reduced [2Fe-2S]-[ferredoxin] + CO2 + 2 H(+). In terms of biological role, CODH oxidizes carbon monoxide coupled, via CooF, to the reduction of a hydrogen cation by a hydrogenase (possibly CooH). This is Carbon monoxide dehydrogenase (cooS) from Methanopyrus kandleri (strain AV19 / DSM 6324 / JCM 9639 / NBRC 100938).